The sequence spans 368 residues: MSEFYIGVMSGTSLDGIDLALCEIEDDAFELLLCASYPFDAELKSDILNAINAQTTLKNIGEIDIRLGKMYADALEKFIEENSLKRVKIRAIGLHGQTLWHEPESQNPFSMQLGNANILTARLGICVVSDFRQKDIALGGQGAPFTPAFHEFLFSKLSGNVAVLNIGGMANITLLREMLSGYDTGCGNVLMDYWISKYNGSPYDKDGEWAKSGTPNRELLREFLKEPYFLKSPPKSTGRELFGEKWLKKQLSEFAKKNQNCSYLKARDIQATLLELSVQSIANEIKKSDTTLLIVCGGGINNRYLMERLQEELGDIKIASSDEYGVSSEFMEAMAFAWLAHERIHKKCVKISSVSGALRDSILGAIYE.

11–18 (GTSLDGID) serves as a coordination point for ATP.

It belongs to the anhydro-N-acetylmuramic acid kinase family.

The enzyme catalyses 1,6-anhydro-N-acetyl-beta-muramate + ATP + H2O = N-acetyl-D-muramate 6-phosphate + ADP + H(+). Its pathway is amino-sugar metabolism; 1,6-anhydro-N-acetylmuramate degradation. The protein operates within cell wall biogenesis; peptidoglycan recycling. Its function is as follows. Catalyzes the specific phosphorylation of 1,6-anhydro-N-acetylmuramic acid (anhMurNAc) with the simultaneous cleavage of the 1,6-anhydro ring, generating MurNAc-6-P. Is required for the utilization of anhMurNAc either imported from the medium or derived from its own cell wall murein, and thus plays a role in cell wall recycling. This is Anhydro-N-acetylmuramic acid kinase from Sulfurimonas denitrificans (strain ATCC 33889 / DSM 1251) (Thiomicrospira denitrificans (strain ATCC 33889 / DSM 1251)).